The primary structure comprises 183 residues: Glutathione-regulated potassium-efflux system ancillary protein KefG (183 aa).

Belongs to the NAD(P)H dehydrogenase (quinone) family. KefG subfamily. In terms of assembly, interacts with KefB.

It is found in the cell inner membrane. It catalyses the reaction a quinone + NADH + H(+) = a quinol + NAD(+). It carries out the reaction a quinone + NADPH + H(+) = a quinol + NADP(+). Its function is as follows. Regulatory subunit of a potassium efflux system that confers protection against electrophiles. Required for full activity of KefB. The sequence is that of Glutathione-regulated potassium-efflux system ancillary protein KefG from Serratia proteamaculans (strain 568).